We begin with the raw amino-acid sequence, 281 residues long: INSIG family protein (281 aa).

Over 1–93 the chain is Cytoplasmic; that stretch reads MSRKEIYEPR…FIDYSSLITF (93 aa). A Phosphoserine modification is found at Ser-28. The helical transmembrane segment at 94–120 threads the bilayer; it reads FCKLCVIFGLGFVFTYLAEQIVQDAKL. Residues 121–134 lie on the Lumenal side of the membrane; it reads PLLTVNLKSWKFEP. The chain crosses the membrane as a helical span at residues 135-159; it reads PWPAIFGFVAVILGLSYRRMDTKYP. The Cytoplasmic portion of the chain corresponds to 160-170; it reads LGAAPLRPSQS. The chain crosses the membrane as a helical span at residues 171–186; sequence SKWQWISRYLAAFATL. The Lumenal segment spans residues 187 to 189; sequence LLS. A helical transmembrane segment spans residues 190–215; the sequence is MKKLLFISNSHSIVALVASSASIWYI. At 216-221 the chain is on the cytoplasmic side; that stretch reads FDRSRN. Residues 222–256 traverse the membrane as a helical segment; sequence GIILSTITSVLGSILYYNLVDTSKIELNGVEFPEI. Residues 257 to 260 are Lumenal-facing; that stretch reads QFRL. The chain crosses the membrane as a helical span at residues 261–281; it reads WIPMILFSASTIVGNAGRLLF.

The protein belongs to the INSIG family.

The protein resides in the endoplasmic reticulum membrane. This Schizosaccharomyces pombe (strain 972 / ATCC 24843) (Fission yeast) protein is INSIG family protein (ins1).